The primary structure comprises 297 residues: Putative S-adenosyl-L-methionine-dependent methyltransferase Mmcs_1044 (297 aa).

S-adenosyl-L-methionine is bound by residues D124 and 153–154; that span reads DL.

This sequence belongs to the UPF0677 family.

Exhibits S-adenosyl-L-methionine-dependent methyltransferase activity. The polypeptide is Putative S-adenosyl-L-methionine-dependent methyltransferase Mmcs_1044 (Mycobacterium sp. (strain MCS)).